A 169-amino-acid polypeptide reads, in one-letter code: MEVYIPSFRYEESDLERGYTVFKIEVLMNGRKHFVEKRYSEFHALHKKLKKCIKTPEIPSKHVRNWVPKVLEQRRQGLETYLQAVILENEELPKLFLDFLNVRHLPSLPKTESYGSFDETESEESSKLSHQPVLLFLRDPYVLPAASDFPNVVIEGVLHGIFYPHLQPR.

Residue Met-1 is modified to N-acetylmethionine. The PX domain occupies 1–125 (MEVYIPSFRY…SFDETESEES (125 aa)). 4 residues coordinate a 1,2-diacyl-sn-glycero-3-phospho-(1D-myo-inositol-3-phosphate): Arg-38, Ser-40, Lys-61, and Arg-74. 2 positions are modified to phosphoserine: Ser-113 and Ser-116.

Belongs to the sorting nexin family.

It localises to the cytoplasmic vesicle membrane. May be involved in several stages of intracellular trafficking. The sequence is that of Sorting nexin-24 (SNX24) from Bos taurus (Bovine).